The following is a 267-amino-acid chain: 2-keto-3-deoxy-L-rhamnonate aldolase (267 aa).

His49 acts as the Proton acceptor in catalysis. Gln151 is a binding site for substrate. Glu153 contacts Mg(2+). Residues Ala178 and Asp179 each contribute to the substrate site. Residue Asp179 coordinates Mg(2+).

It belongs to the HpcH/HpaI aldolase family. KDR aldolase subfamily. In terms of assembly, homohexamer. Requires Mg(2+) as cofactor.

The enzyme catalyses 2-dehydro-3-deoxy-L-rhamnonate = (S)-lactaldehyde + pyruvate. In terms of biological role, catalyzes the reversible retro-aldol cleavage of 2-keto-3-deoxy-L-rhamnonate (KDR) to pyruvate and lactaldehyde. The sequence is that of 2-keto-3-deoxy-L-rhamnonate aldolase from Klebsiella pneumoniae subsp. pneumoniae (strain ATCC 700721 / MGH 78578).